Consider the following 433-residue polypeptide: Enolase (433 aa).

Glutamine 167 contributes to the (2R)-2-phosphoglycerate binding site. Glutamate 209 functions as the Proton donor in the catalytic mechanism. Residues aspartate 246, glutamate 291, and aspartate 318 each coordinate Mg(2+). Lysine 343, arginine 372, serine 373, and lysine 394 together coordinate (2R)-2-phosphoglycerate. Lysine 343 functions as the Proton acceptor in the catalytic mechanism.

The protein belongs to the enolase family. As to quaternary structure, component of the RNA degradosome, a multiprotein complex involved in RNA processing and mRNA degradation. Requires Mg(2+) as cofactor.

Its subcellular location is the cytoplasm. The protein resides in the secreted. It is found in the cell surface. It carries out the reaction (2R)-2-phosphoglycerate = phosphoenolpyruvate + H2O. It functions in the pathway carbohydrate degradation; glycolysis; pyruvate from D-glyceraldehyde 3-phosphate: step 4/5. Its function is as follows. Catalyzes the reversible conversion of 2-phosphoglycerate (2-PG) into phosphoenolpyruvate (PEP). It is essential for the degradation of carbohydrates via glycolysis. The protein is Enolase of Tolumonas auensis (strain DSM 9187 / NBRC 110442 / TA 4).